A 369-amino-acid polypeptide reads, in one-letter code: Ferredoxin--NADP reductase, chloroplastic (369 aa).

The N-terminal 55 residues, 1 to 55, are a transit peptide targeting the chloroplast; it reads MTTAVTAAVSFPSTKTTSLSARSSSVISPDKISYKKVPLYYRNVSATGKMGPIRA. An FAD-binding FR-type domain is found at 90–212; it reads KTPYVGRCLL…TGPVGKEMLM (123 aa). Residues 148 to 151, 169 to 171, tyrosine 175, 186 to 188, and threonine 227 each bind FAD; these read RLYS, CVK, and VCS. The NADP(+) site is built by serine 151 and lysine 171. NADP(+) is bound by residues threonine 227, 259-260, 289-290, 299-301, 328-329, and glutamate 367; these read VP, SR, KMY, and GL.

The protein belongs to the ferredoxin--NADP reductase type 1 family. The cofactor is FAD.

It localises to the plastid. The protein localises to the chloroplast stroma. Its subcellular location is the chloroplast thylakoid membrane. It carries out the reaction 2 reduced [2Fe-2S]-[ferredoxin] + NADP(+) + H(+) = 2 oxidized [2Fe-2S]-[ferredoxin] + NADPH. It participates in energy metabolism; photosynthesis. May play a key role in regulating the relative amounts of cyclic and non-cyclic electron flow to meet the demands of the plant for ATP and reducing power. The polypeptide is Ferredoxin--NADP reductase, chloroplastic (PETH) (Spinacia oleracea (Spinach)).